The following is a 277-amino-acid chain: S-formylglutathione hydrolase FrmB (277 aa).

Residues Ser-145, Asp-221, and His-254 each act as charge relay system in the active site.

It belongs to the esterase D family.

It carries out the reaction S-formylglutathione + H2O = formate + glutathione + H(+). Serine hydrolase involved in the detoxification of formaldehyde. Hydrolyzes S-formylglutathione to glutathione and formate. The protein is S-formylglutathione hydrolase FrmB (frmB) of Escherichia coli O6:H1 (strain CFT073 / ATCC 700928 / UPEC).